The primary structure comprises 352 residues: C-C chemokine receptor type 5 (352 aa).

Topologically, residues M1–A30 are extracellular. Y3 is subject to Sulfotyrosine. 2 O-linked (GalNAc...) serine glycosylation sites follow: S6 and S7. Sulfotyrosine is present on residues Y10, Y14, and Y15. 2 disulfide bridges follow: C20–C269 and C101–C178. The chain crosses the membrane as a helical span at residues R31 to C58. Residues K59–Y68 lie on the Cytoplasmic side of the membrane. The helical transmembrane segment at L69–Y89 threads the bilayer. The Extracellular portion of the chain corresponds to A90–Q102. Residues L103 to I124 traverse the membrane as a helical segment. At D125–T141 the chain is on the cytoplasmic side. The helical transmembrane segment at V142–F166 threads the bilayer. The Extracellular portion of the chain corresponds to T167–I198. The chain crosses the membrane as a helical span at residues V199–L218. The Cytoplasmic segment spans residues K219 to R235. A helical transmembrane segment spans residues L236 to F260. At Q261–Q277 the chain is on the extracellular side. The helical transmembrane segment at A278 to G301 threads the bilayer. Topologically, residues E302 to L352 are cytoplasmic. S-palmitoyl cysteine attachment occurs at residues C321, C323, and C324. A phosphoserine; by BARK1 mark is found at S336, S337, S342, and S349.

Belongs to the G-protein coupled receptor 1 family. As to quaternary structure, interacts with PRAF2. Efficient ligand binding to CCL3/MIP-1alpha and CCL4/MIP-1beta requires sulfation, O-glycosylation and sialic acid modifications. Glycosylation on Ser-6 is required for efficient binding of CCL4. Interacts with GRK2. Interacts with ARRB1 and ARRB2. Interacts with CNIH4. Interacts with S100A4; this interaction stimulates T-lymphocyte chemotaxis. Sulfated on at least 2 of the N-terminal tyrosines. Sulfation is required for efficient binding of the chemokines, CCL3 and CCL4. Post-translationally, palmitoylation in the C-terminal is important for cell surface expression. In terms of processing, phosphorylation on serine residues in the C-terminal is stimulated by binding CC chemokines especially by APO-RANTES. O-glycosylated, but not N-glycosylated. Ser-6 appears to be the major site even if Ser-7 may be also O-glycosylated. Also sialylated glycans present which contribute to chemokine binding. Thr-16 and Ser-17 may also be glycosylated and, if so, with small moieties such as a T-antigen.

The protein localises to the cell membrane. Receptor for a number of inflammatory CC-chemokines including CCL3/MIP-1-alpha, CCL4/MIP-1-beta and RANTES and subsequently transduces a signal by increasing the intracellular calcium ion level. May play a role in the control of granulocytic lineage proliferation or differentiation. Participates in T-lymphocyte migration to the infection site by acting as a chemotactic receptor. This is C-C chemokine receptor type 5 (CCR5) from Erythrocebus patas (Red guenon).